Consider the following 95-residue polypeptide: Costars family protein WS02710_H03 (95 aa).

It belongs to the costars family.

This Picea sitchensis (Sitka spruce) protein is Costars family protein WS02710_H03.